A 1399-amino-acid polypeptide reads, in one-letter code: DNA-directed RNA polymerase subunit beta' (1399 aa).

Zn(2+) contacts are provided by Cys-70, Cys-72, Cys-85, and Cys-88. Mg(2+) contacts are provided by Asp-460, Asp-462, and Asp-464. 4 residues coordinate Zn(2+): Cys-814, Cys-888, Cys-895, and Cys-898.

The protein belongs to the RNA polymerase beta' chain family. In terms of assembly, the RNAP catalytic core consists of 2 alpha, 1 beta, 1 beta' and 1 omega subunit. When a sigma factor is associated with the core the holoenzyme is formed, which can initiate transcription. It depends on Mg(2+) as a cofactor. The cofactor is Zn(2+).

It carries out the reaction RNA(n) + a ribonucleoside 5'-triphosphate = RNA(n+1) + diphosphate. Its function is as follows. DNA-dependent RNA polymerase catalyzes the transcription of DNA into RNA using the four ribonucleoside triphosphates as substrates. The sequence is that of DNA-directed RNA polymerase subunit beta' from Pseudomonas putida (strain ATCC 700007 / DSM 6899 / JCM 31910 / BCRC 17059 / LMG 24140 / F1).